Consider the following 283-residue polypeptide: Elongation factor Ts (283 aa).

Residues 79-82 are involved in Mg(2+) ion dislocation from EF-Tu; it reads TDFV.

Belongs to the EF-Ts family.

Its subcellular location is the cytoplasm. Functionally, associates with the EF-Tu.GDP complex and induces the exchange of GDP to GTP. It remains bound to the aminoacyl-tRNA.EF-Tu.GTP complex up to the GTP hydrolysis stage on the ribosome. The polypeptide is Elongation factor Ts (Shewanella denitrificans (strain OS217 / ATCC BAA-1090 / DSM 15013)).